The sequence spans 228 residues: 2,3-bisphosphoglycerate-dependent phosphoglycerate mutase (228 aa).

Substrate is bound by residues 8-15, 21-22, Arg60, 87-90, Lys98, 114-115, and 183-184; these read RHGQSEWN, TG, ERHY, RR, and GN. The Tele-phosphohistidine intermediate role is filled by His9. Glu87 serves as the catalytic Proton donor/acceptor.

It belongs to the phosphoglycerate mutase family. BPG-dependent PGAM subfamily.

It carries out the reaction (2R)-2-phosphoglycerate = (2R)-3-phosphoglycerate. It functions in the pathway carbohydrate degradation; glycolysis; pyruvate from D-glyceraldehyde 3-phosphate: step 3/5. Catalyzes the interconversion of 2-phosphoglycerate and 3-phosphoglycerate. The polypeptide is 2,3-bisphosphoglycerate-dependent phosphoglycerate mutase (Staphylococcus aureus (strain Mu3 / ATCC 700698)).